The sequence spans 425 residues: Glutamate-1-semialdehyde 2,1-aminomutase (425 aa).

N6-(pyridoxal phosphate)lysine is present on lysine 265.

Belongs to the class-III pyridoxal-phosphate-dependent aminotransferase family. HemL subfamily. Homodimer. Pyridoxal 5'-phosphate serves as cofactor.

The protein resides in the cytoplasm. It catalyses the reaction (S)-4-amino-5-oxopentanoate = 5-aminolevulinate. It functions in the pathway porphyrin-containing compound metabolism; protoporphyrin-IX biosynthesis; 5-aminolevulinate from L-glutamyl-tRNA(Glu): step 2/2. The polypeptide is Glutamate-1-semialdehyde 2,1-aminomutase (Laribacter hongkongensis (strain HLHK9)).